The following is a 70-amino-acid chain: Small ribosomal subunit protein bS21 (70 aa).

The protein belongs to the bacterial ribosomal protein bS21 family.

This Chromobacterium violaceum (strain ATCC 12472 / DSM 30191 / JCM 1249 / CCUG 213 / NBRC 12614 / NCIMB 9131 / NCTC 9757 / MK) protein is Small ribosomal subunit protein bS21.